A 119-amino-acid chain; its full sequence is Ribonuclease P protein component (119 aa).

The protein belongs to the RnpA family. In terms of assembly, consists of a catalytic RNA component (M1 or rnpB) and a protein subunit.

The enzyme catalyses Endonucleolytic cleavage of RNA, removing 5'-extranucleotides from tRNA precursor.. Functionally, RNaseP catalyzes the removal of the 5'-leader sequence from pre-tRNA to produce the mature 5'-terminus. It can also cleave other RNA substrates such as 4.5S RNA. The protein component plays an auxiliary but essential role in vivo by binding to the 5'-leader sequence and broadening the substrate specificity of the ribozyme. In Streptococcus pyogenes serotype M5 (strain Manfredo), this protein is Ribonuclease P protein component.